Reading from the N-terminus, the 399-residue chain is Brefeldin A resistance protein (399 aa).

Basic and acidic residues-rich tracts occupy residues 1 to 31 (MTSK…DETS), 49 to 69 (SKSE…KETT), and 101 to 130 (KVEE…KESA). 2 disordered regions span residues 1–173 (MTSK…FGAF) and 191–269 (KKFA…SEII). A compositionally biased stretch (low complexity) spans 138-157 (SPFSQFASFSNASSPFSNVS). 2 stretches are compositionally biased toward basic and acidic residues: residues 205 to 217 (SGKE…KSSE) and 241 to 252 (TKSEPKEADKGS). Positions 253 to 263 (GDSTKSTMHQL) are enriched in polar residues. The region spanning 256 to 396 (TKSTMHQLSD…VLEAIPKGGR (141 aa)) is the RanBD1 domain.

In terms of processing, phosphorylated.

Its subcellular location is the nucleus. In Schizosaccharomyces pombe (strain 972 / ATCC 24843) (Fission yeast), this protein is Brefeldin A resistance protein (hba1).